The chain runs to 509 residues: NADH-quinone oxidoreductase subunit M (509 aa).

Residues 1–21 form a helical membrane-spanning segment; sequence MLLPWLILIPFIGGFLCWQTE. The Cytoplasmic portion of the chain corresponds to 22-29; it reads RFGVKVPR. The helical transmembrane segment at 30-50 threads the bilayer; the sequence is WIALITMGLTLALSLQLWLQG. The Periplasmic portion of the chain corresponds to 51–82; that stretch reads GYSLTQSAGIPQWQSEFDMPWIPRFGISIHLA. A helical membrane pass occupies residues 83-103; the sequence is IDGLSLLMVVLTGLLGVLAVL. Over 104–121 the chain is Cytoplasmic; that stretch reads CSWKEIEKYQGFFHLNLM. Residues 122–142 traverse the membrane as a helical segment; that stretch reads WILGGVIGVFLAIDMFLFFFF. Residues 143 to 173 are Periplasmic-facing; that stretch reads WEMMLVPMYFLIALWGHKASDGKTRITAATK. Residues 174 to 194 form a helical membrane-spanning segment; that stretch reads FFIYTQASGLVMLIAILALVF. Residues 195–221 are Cytoplasmic-facing; that stretch reads VHYNATGVWTFNYEELLNTPMSSGVEY. The helical transmembrane segment at 222-242 threads the bilayer; that stretch reads LLMLGFFIAFAVKMPVVPLHG. Over 243–258 the chain is Periplasmic; that stretch reads WLPDAHSQAPTAGSVD. A helical membrane pass occupies residues 259 to 279; sequence LAGILLKTAAYGLLRFSLPLF. Topologically, residues 280-285 are cytoplasmic; the sequence is PNASAE. Residues 286 to 306 traverse the membrane as a helical segment; sequence FAPIAMWLGVIGIFYGAWMAF. Over 307–313 the chain is Periplasmic; it reads AQTDIKR. The chain crosses the membrane as a helical span at residues 314–334; sequence LIAYTSVSHMGFVLIAIYTGS. At 335 to 339 the chain is on the cytoplasmic side; it reads QLAYQ. The helical transmembrane segment at 340 to 360 threads the bilayer; the sequence is GAVIQMIAHGLSAAGLFILCG. Residues 361-382 lie on the Periplasmic side of the membrane; the sequence is QLYERIHTRDMRMMGGLWSKMK. 2 helical membrane-spanning segments follow: residues 383-403 and 404-424; these read WLPA…GTGN and FVGE…ITVI. Ser425 is a topological domain (periplasmic). A helical transmembrane segment spans residues 426-446; sequence TFGLVFASVYSLAMLHRAYFG. At 447-464 the chain is on the cytoplasmic side; it reads KAKSQIASQELPGMSLRE. The helical transmembrane segment at 465–485 threads the bilayer; that stretch reads LFMILLLVVLLVLLGFYPQPI. The Periplasmic portion of the chain corresponds to 486–509; that stretch reads LDTSHSAIGNIQQWFVNSVTTTRP.

Belongs to the complex I subunit 4 family. Composed of 13 different subunits. Subunits NuoA, H, J, K, L, M, N constitute the membrane sector of the complex.

It is found in the cell inner membrane. The catalysed reaction is a quinone + NADH + 5 H(+)(in) = a quinol + NAD(+) + 4 H(+)(out). NDH-1 shuttles electrons from NADH, via FMN and iron-sulfur (Fe-S) centers, to quinones in the respiratory chain. The immediate electron acceptor for the enzyme in this species is believed to be ubiquinone. Couples the redox reaction to proton translocation (for every two electrons transferred, four hydrogen ions are translocated across the cytoplasmic membrane), and thus conserves the redox energy in a proton gradient. This Escherichia coli O157:H7 protein is NADH-quinone oxidoreductase subunit M (nuoM).